We begin with the raw amino-acid sequence, 402 residues long: Tryptophan synthase beta chain (402 aa).

Lysine 91 is modified (N6-(pyridoxal phosphate)lysine).

It belongs to the TrpB family. Tetramer of two alpha and two beta chains. Requires pyridoxal 5'-phosphate as cofactor.

It catalyses the reaction (1S,2R)-1-C-(indol-3-yl)glycerol 3-phosphate + L-serine = D-glyceraldehyde 3-phosphate + L-tryptophan + H2O. It participates in amino-acid biosynthesis; L-tryptophan biosynthesis; L-tryptophan from chorismate: step 5/5. The beta subunit is responsible for the synthesis of L-tryptophan from indole and L-serine. The polypeptide is Tryptophan synthase beta chain (Streptococcus thermophilus (strain CNRZ 1066)).